The following is a 129-amino-acid chain: Glycine cleavage system H protein (129 aa).

In terms of domain architecture, Lipoyl-binding spans 24–106 (LVRVGISAFA…HGEGWLLVLR (83 aa)). Position 65 is an N6-lipoyllysine (K65).

The protein belongs to the GcvH family. As to quaternary structure, the glycine cleavage system is composed of four proteins: P, T, L and H. It depends on (R)-lipoate as a cofactor.

The glycine cleavage system catalyzes the degradation of glycine. The H protein shuttles the methylamine group of glycine from the P protein to the T protein. This chain is Glycine cleavage system H protein, found in Synechococcus sp. (strain CC9605).